Here is a 290-residue protein sequence, read N- to C-terminus: 4-hydroxy-tetrahydrodipicolinate synthase (290 aa).

Thr-42 serves as a coordination point for pyruvate. The active-site Proton donor/acceptor is Tyr-129. Residue Lys-157 is the Schiff-base intermediate with substrate of the active site. Pyruvate is bound at residue Ile-198.

It belongs to the DapA family. Homotetramer; dimer of dimers.

The protein resides in the cytoplasm. It carries out the reaction L-aspartate 4-semialdehyde + pyruvate = (2S,4S)-4-hydroxy-2,3,4,5-tetrahydrodipicolinate + H2O + H(+). It functions in the pathway amino-acid biosynthesis; L-lysine biosynthesis via DAP pathway; (S)-tetrahydrodipicolinate from L-aspartate: step 3/4. Functionally, catalyzes the condensation of (S)-aspartate-beta-semialdehyde [(S)-ASA] and pyruvate to 4-hydroxy-tetrahydrodipicolinate (HTPA). This is 4-hydroxy-tetrahydrodipicolinate synthase from Chlamydia felis (strain Fe/C-56) (Chlamydophila felis).